Consider the following 371-residue polypeptide: Gustatory and pheromone receptor 39a, isoform A (371 aa).

The Cytoplasmic segment spans residues 1–41; it reads MSKVCRDLRIYLRLLHIMGMMCWHFDSDHCQLVATSGSERY. Residues 42 to 62 form a helical membrane-spanning segment; the sequence is AVVYAGCILVSTTAGFIFALL. The Extracellular segment spans residues 63–80; sequence HPSRFHIAIYNQTGNFYE. A glycan (N-linked (GlcNAc...) asparagine) is linked at N73. A helical membrane pass occupies residues 81–101; the sequence is AVIFRSTCVVLFLVYVILYAW. At 102–127 the chain is on the cytoplasmic side; sequence RHRYRDLVQHILRLNRRCASSCTNQQ. The helical transmembrane segment at 128-148 threads the bilayer; that stretch reads FLHNIILYGMLTILCFGNYLH. The Extracellular portion of the chain corresponds to 149–161; it reads GYTRAGLATLPLA. Residues 162 to 182 traverse the membrane as a helical segment; the sequence is LCMLVYIFAFLVLCLLLMFFV. Residues 183-228 are Cytoplasmic-facing; the sequence is SLKQVMTAGLIHYNQQLCQGDLISGLRGRQQILKLCGGELNECFGL. A helical transmembrane segment spans residues 229–249; that stretch reads LMLPIVALVLLMAPSGPFFLI. At 250–263 the chain is on the extracellular side; that stretch reads STVLEGKFRPDECL. A helical transmembrane segment spans residues 264-284; that stretch reads IMLLTSSTWDTPWMIMLVLML. At 285-340 the chain is on the cytoplasmic side; the sequence is RTNGISEEANKTAKMLTKVPRTGTGLDRMIEKFLLKNLRQKPILTAYGFFALDKST. The helical transmembrane segment at 341-361 threads the bilayer; sequence LFKLFTAIFTYMVILVQFKEM. Topologically, residues 362–371 are extracellular; it reads ENSTKSINKF. N-linked (GlcNAc...) asparagine glycosylation is present at N363.

The protein belongs to the insect chemoreceptor superfamily. Gustatory receptor (GR) family. Gr21a subfamily. Expressed in the adult labellar chemosensory neurons, and adult thorax and wing. In larvae, is expressed in neurons of the posterior pharyngeal sense organ.

The protein localises to the cell membrane. Functionally, gustatory receptor which mediates acceptance or avoidance behavior, depending on its substrates. Plays a role in sustaining courtship behavior in males, possibly through the reception of a stimulating arrestant pheromone. This is Gustatory and pheromone receptor 39a, isoform A (Gr39a) from Drosophila melanogaster (Fruit fly).